We begin with the raw amino-acid sequence, 144 residues long: Arginine decarboxylase proenzyme (144 aa).

Serine 80 (schiff-base intermediate with substrate; via pyruvic acid) is an active-site residue. Serine 80 carries the post-translational modification Pyruvic acid (Ser); by autocatalysis. Histidine 85 functions as the Proton acceptor; for processing activity in the catalytic mechanism. Cysteine 100 serves as the catalytic Proton donor; for catalytic activity.

The protein belongs to the prokaryotic AdoMetDC family. Type 1 subfamily. In terms of assembly, heterooctamer of four alpha and four beta chains arranged as a tetramer of alpha/beta heterodimers. Pyruvate serves as cofactor. Post-translationally, is synthesized initially as an inactive proenzyme. Formation of the active enzyme involves a self-maturation process in which the active site pyruvoyl group is generated from an internal serine residue via an autocatalytic post-translational modification. Two non-identical subunits are generated from the proenzyme in this reaction, and the pyruvate is formed at the N-terminus of the alpha chain, which is derived from the carboxyl end of the proenzyme. The post-translation cleavage follows an unusual pathway, termed non-hydrolytic serinolysis, in which the side chain hydroxyl group of the serine supplies its oxygen atom to form the C-terminus of the beta chain, while the remainder of the serine residue undergoes an oxidative deamination to produce ammonia and the pyruvoyl group blocking the N-terminus of the alpha chain.

It carries out the reaction L-arginine + H(+) = agmatine + CO2. It participates in amine and polyamine biosynthesis; agmatine biosynthesis; agmatine from L-arginine: step 1/1. In terms of biological role, specifically catalyzes the decarboxylation of L-arginine to agmatine. Has no S-adenosylmethionine decarboxylase (AdoMetDC) activity. The chain is Arginine decarboxylase proenzyme from Ignicoccus hospitalis (strain KIN4/I / DSM 18386 / JCM 14125).